Here is a 177-residue protein sequence, read N- to C-terminus: Large ribosomal subunit protein uL6 (177 aa).

This sequence belongs to the universal ribosomal protein uL6 family. In terms of assembly, part of the 50S ribosomal subunit.

This protein binds to the 23S rRNA, and is important in its secondary structure. It is located near the subunit interface in the base of the L7/L12 stalk, and near the tRNA binding site of the peptidyltransferase center. The chain is Large ribosomal subunit protein uL6 from Pseudomonas fluorescens (strain ATCC BAA-477 / NRRL B-23932 / Pf-5).